Here is a 374-residue protein sequence, read N- to C-terminus: S-adenosylmethionine:tRNA ribosyltransferase-isomerase (374 aa).

The protein belongs to the QueA family. In terms of assembly, monomer.

The protein localises to the cytoplasm. The enzyme catalyses 7-aminomethyl-7-carbaguanosine(34) in tRNA + S-adenosyl-L-methionine = epoxyqueuosine(34) in tRNA + adenine + L-methionine + 2 H(+). The protein operates within tRNA modification; tRNA-queuosine biosynthesis. Its function is as follows. Transfers and isomerizes the ribose moiety from AdoMet to the 7-aminomethyl group of 7-deazaguanine (preQ1-tRNA) to give epoxyqueuosine (oQ-tRNA). This Prochlorococcus marinus (strain MIT 9301) protein is S-adenosylmethionine:tRNA ribosyltransferase-isomerase.